Reading from the N-terminus, the 233-residue chain is MALRSLVTRKNLPSAFKAATGLGQLRGLQTFSLPDLPYDYGALEPAISGEIMQLHHQKHHQTYITNYNKALEQLNDAIEKGDSAAVVKLQSAIKFNGGGHVNHSIFWKNLAPVREGGGELPHGSLGWAIDADFGSLEKLIQLMNAEGAALQGSGWVWLALDKELKKLVVETTANQDPLVTKGPTLVPLLGIDVWEHAYYLQYKNVRPDYLKNIWKVMNWKYASEVYAKECPSS.

A mitochondrion-targeting transit peptide spans 1-27 (MALRSLVTRKNLPSAFKAATGLGQLRG). Mn(2+) contacts are provided by His55, His103, Asp192, and His196.

This sequence belongs to the iron/manganese superoxide dismutase family. Homotetramer. Mn(2+) serves as cofactor. Present in all tissues examined (leaf, petiole, root, latex, callus) with young leaves showing the highest levels in intact plants.

It localises to the mitochondrion matrix. It carries out the reaction 2 superoxide + 2 H(+) = H2O2 + O2. In terms of biological role, destroys superoxide anion radicals which are normally produced within the cells and which are toxic to biological systems. This chain is Superoxide dismutase [Mn], mitochondrial (SODA), found in Hevea brasiliensis (Para rubber tree).